Here is a 275-residue protein sequence, read N- to C-terminus: Peptidoglycan-N-acetylglucosamine deacetylase BC_1960 (275 aa).

Residues 81-262 (AEVALTFDDG…QLKTKGARFV (182 aa)) enclose the NodB homology domain. D88 acts as the Proton acceptor in catalysis. D89, H139, and H143 together coordinate Zn(2+). A 2-hydroxyproline; partial modification is found at P179. H233 (proton donor) is an active-site residue.

The protein belongs to the polysaccharide deacetylase family. Requires Zn(2+) as cofactor. Post-translationally, hydroxylated on Pro-179. Hydroxylation alters the active site and enhances significantly deacetylase activity, probably by creating a more favorable environment for transition-state stabilization. It might be autocatalytic.

The catalysed reaction is peptidoglycan-N-acetyl-D-glucosamine + H2O = peptidoglycan-D-glucosamine + acetate.. With respect to regulation, deacetylase activity is stimulated by hydroxylation on Pro-179. Inhibited by CuCl(2) and ZnCl(2). Inhibited by the hydroxamate N-hydroxy-4-(naphthalene-1-yl)benzamide (NHNB). Catalyzes the deacetylation of N-acetylglucosamine (GlcNAc) residues in peptidoglycan. Also acts on soluble chitin substrates and N-acetylchitooligomers. Acts on cell wall peptidoglycan from the Gram-positive bacteria B.cereus and B.subtilis and the Gram-negative bacterium H.pylori. Not active on acetylated xylan. The chain is Peptidoglycan-N-acetylglucosamine deacetylase BC_1960 from Bacillus cereus (strain ATCC 14579 / DSM 31 / CCUG 7414 / JCM 2152 / NBRC 15305 / NCIMB 9373 / NCTC 2599 / NRRL B-3711).